The primary structure comprises 1230 residues: DNA-directed RNA polymerase, mitochondrial (1230 aa).

The N-terminal 41 residues, 1–41, are a transit peptide targeting the mitochondrion; it reads MSALCWGRGAAGLKRALRPCGRPGLPGKEGTAGGVCGPRRS. Disordered stretches follow at residues 18-55, 95-115, and 731-750; these read RPCG…DRRK, GSGD…KDAT, and VPAP…PHSA. The span at 732-744 shows a compositional bias: pro residues; that stretch reads PAPPSEAPQPPEA. The segment at 802-1230 is mediates interaction with TEFM; it reads FRGRTYPCPP…QVKRSTYFFS (429 aa). Active-site residues include Asp-922, Lys-991, and Asp-1151.

This sequence belongs to the phage and mitochondrial RNA polymerase family. As to quaternary structure, homodimer. Component of the mitochondrial transcription initiation complex, composed at least of TFB2M, TFAM and POLRMT. In this complex TFAM recruits POLRMT to the promoter whereas TFB2M induces structural changes in POLRMT to enable promoter opening and trapping of the DNA non-template strand. Upon metabolic stress, forms a complex composed of FOXO3, SIRT3 and mitochondrial RNA polymerase POLRMT; the complex is recruited to mtDNA in a SIRT3-dependent manner. Also forms a complex composed of FOXO3, SIRT3, TFAM and POLRMT. Interacts with TFB1M and TFB2M, leading to the stimulation of transcription. Interacts with TEFM. Interacts with MTRES1.

Its subcellular location is the mitochondrion. The catalysed reaction is RNA(n) + a ribonucleoside 5'-triphosphate = RNA(n+1) + diphosphate. In terms of biological role, DNA-dependent RNA polymerase catalyzes the transcription of mitochondrial DNA into RNA using the four ribonucleoside triphosphates as substrates. Component of the mitochondrial transcription initiation complex, composed at least of TFB2M, TFAM and POLRMT that is required for basal transcription of mitochondrial DNA. In this complex, TFAM recruits POLRMT to a specific promoter whereas TFB2M induces structural changes in POLRMT to enable promoter opening and trapping of the DNA non-template strand. Has DNA primase activity. Catalyzes the synthesis of short RNA primers that are necessary for the initiation of lagging-strand DNA synthesis from the origin of light-strand DNA replication (OriL). The sequence is that of DNA-directed RNA polymerase, mitochondrial from Homo sapiens (Human).